The primary structure comprises 815 residues: Phenylalanine--tRNA ligase beta subunit (815 aa).

The tRNA-binding domain occupies 39 to 153; the sequence is ASHAQGVVVG…NVPDLGQPVG (115 aa). The region spanning 414–498 is the B5 domain; that stretch reads KSAEPVKLRR…RLVGFDRFEA (85 aa). Asp476, Asp482, Glu485, and Glu486 together coordinate Mg(2+). Residues 721-814 form the FDX-ACB domain; it reads PTVPAMELDL…LVKQFSAELR (94 aa).

This sequence belongs to the phenylalanyl-tRNA synthetase beta subunit family. Type 1 subfamily. As to quaternary structure, tetramer of two alpha and two beta subunits. It depends on Mg(2+) as a cofactor.

The protein resides in the cytoplasm. It carries out the reaction tRNA(Phe) + L-phenylalanine + ATP = L-phenylalanyl-tRNA(Phe) + AMP + diphosphate + H(+). The protein is Phenylalanine--tRNA ligase beta subunit of Prochlorococcus marinus (strain MIT 9313).